Consider the following 327-residue polypeptide: Undecaprenyl-phosphate 4-deoxy-4-formamido-L-arabinose transferase (327 aa).

Helical transmembrane passes span 236-256 (LSIFGSVIALLGFAFGLLLVV) and 270-290 (VFMLFAVLFMFIGAQFIGMGL).

This sequence belongs to the glycosyltransferase 2 family.

The protein resides in the cell inner membrane. The catalysed reaction is UDP-4-deoxy-4-formamido-beta-L-arabinose + di-trans,octa-cis-undecaprenyl phosphate = 4-deoxy-4-formamido-alpha-L-arabinopyranosyl di-trans,octa-cis-undecaprenyl phosphate + UDP. The protein operates within glycolipid biosynthesis; 4-amino-4-deoxy-alpha-L-arabinose undecaprenyl phosphate biosynthesis; 4-amino-4-deoxy-alpha-L-arabinose undecaprenyl phosphate from UDP-4-deoxy-4-formamido-beta-L-arabinose and undecaprenyl phosphate: step 1/2. It participates in bacterial outer membrane biogenesis; lipopolysaccharide biosynthesis. Its function is as follows. Catalyzes the transfer of 4-deoxy-4-formamido-L-arabinose from UDP to undecaprenyl phosphate. The modified arabinose is attached to lipid A and is required for resistance to polymyxin and cationic antimicrobial peptides. The protein is Undecaprenyl-phosphate 4-deoxy-4-formamido-L-arabinose transferase of Klebsiella pneumoniae (strain 342).